The primary structure comprises 491 residues: E3 ubiquitin-protein ligase Hakai (491 aa).

Residues 1-61 are disordered; the sequence is MDHTDNELQG…PAKAPPGDEE (61 aa). The segment at 109–149 adopts an RING-type zinc-finger fold; sequence CDKCGLPIKIYGRMIPCKHVFCYDCAILHEKKGDKMCPGCS. Residues 148–206 form an HYB domain region; the sequence is CSDPVQRIEQCTRGSLFMCSIVQGCKRTYLSQRDLQAHINHRHMRAGKPVTRASLENVH. The C2H2-type zinc-finger motif lies at 164 to 190; sequence FMCSIVQGCKRTYLSQRDLQAHINHRH. Residues S201, S285, and S290 each carry the phosphoserine modification. A disordered region spans residues 255 to 491; sequence QPHEDIRAPP…DQTRYRPYYQ (237 aa). Pro residues-rich tracts occupy residues 342 to 359, 372 to 389, and 399 to 423; these read APPPPPPPPISHPMPHPP, APPPPMTSAPPPITPPPG, and MNHPPPGPPPPQHGGPPVTAPPPHH. The segment covering 427-442 has biased composition (polar residues); that stretch reads NSLPQFTEDQGTLSPP. Residues 457–478 are compositionally biased toward pro residues; it reads PRGPPPPPRLQGPPSQTPLPGP.

The protein belongs to the Hakai family. In terms of assembly, homodimer. Interacts with tyrosine-phosphorylated SRC substrates. Component of the WMM complex, a N6-methyltransferase complex composed of a catalytic subcomplex, named MAC, and of an associated subcomplex, named MACOM. The MAC subcomplex is composed of METTL3 and METTL14. The MACOM subcomplex is composed of WTAP, ZC3H13, CBLL1/HAKAI, VIRMA, and, in some cases of RBM15 (RBM15 or RBM15B). Also a component of a MACOM-like complex, named WTAP complex, composed of WTAP, ZC3H13, CBLL1, VIRMA, RBM15, BCLAF1 and THRAP3. In terms of processing, phosphorylated on tyrosine residues.

It is found in the nucleus speckle. It localises to the nucleus. The protein localises to the nucleoplasm. Its subcellular location is the cytoplasm. It catalyses the reaction S-ubiquitinyl-[E2 ubiquitin-conjugating enzyme]-L-cysteine + [acceptor protein]-L-lysine = [E2 ubiquitin-conjugating enzyme]-L-cysteine + N(6)-ubiquitinyl-[acceptor protein]-L-lysine.. It functions in the pathway protein modification; protein ubiquitination. E3 ubiquitin-protein ligase that mediates ubiquitination of several tyrosine-phosphorylated Src substrates, including CDH1, CTTN and DOK1. Targets CDH1 for endocytosis and degradation. Associated component of the WMM complex, a complex that mediates N6-methyladenosine (m6A) methylation of RNAs, a modification that plays a role in the efficiency of mRNA splicing and RNA processing. Its function in the WMM complex is unknown. The polypeptide is E3 ubiquitin-protein ligase Hakai (Homo sapiens (Human)).